The following is a 212-amino-acid chain: 2',3'-cyclic-nucleotide 3'-phosphodiesterase (212 aa).

His51 functions as the Proton donor/acceptor in the catalytic mechanism. Thr53 contributes to the substrate binding site. His146 (proton donor/acceptor) is an active-site residue. Substrate is bound by residues Ser148 and Tyr151.

This sequence belongs to the 2H phosphoesterase superfamily. CPD1 family.

The protein localises to the golgi apparatus. It carries out the reaction a nucleoside 2',3'-cyclic phosphate + H2O = a nucleoside 2'-phosphate + H(+). Its function is as follows. Involved in the metabolism of ADP-ribose 1',2'-cyclic phosphate which is produced as a consequence of tRNA splicing. This is 2',3'-cyclic-nucleotide 3'-phosphodiesterase (cpd-7) from Neurospora crassa (strain ATCC 24698 / 74-OR23-1A / CBS 708.71 / DSM 1257 / FGSC 987).